The chain runs to 309 residues: UPF0276 protein RB0508 (309 aa).

The protein belongs to the UPF0276 family.

The polypeptide is UPF0276 protein RB0508 (Rhizobium meliloti (strain 1021) (Ensifer meliloti)).